Consider the following 540-residue polypeptide: Putative F-box/LRR-repeat protein At5g41840 (540 aa).

One can recognise an F-box domain in the interval 13 to 61 (GDRISGLPDALICHILSFLPTKEAASTTVLAKRWKPLLAFVPNLNFDDS). 7 LRR repeats span residues 80–105 (FMSF…HVKC), 137–165 (RNYC…KIQF), 189–214 (YFKI…VLAN), 217–242 (WADS…NFCR), 254–282 (YEDY…EYSD), 329–360 (ILYL…TIKT), and 361–386 (TPYV…VFEG).

The polypeptide is Putative F-box/LRR-repeat protein At5g41840 (Arabidopsis thaliana (Mouse-ear cress)).